Reading from the N-terminus, the 538-residue chain is Protein BFR2 (538 aa).

Positions 1-239 (MVKAKGRAKE…AKPMMAALST (239 aa)) are disordered. Residues 7–23 (RAKEFQDPDEPITKDYD) show a composition bias toward basic and acidic residues. Acidic residues-rich tracts occupy residues 80–105 (LEEE…PETA) and 172–222 (DSED…DEED). Residues 290–363 (YEAAEEAAIK…KWSRKVQSVN (74 aa)) are a coiled coil.

It belongs to the AATF family.

It is found in the nucleus. It localises to the nucleolus. This Gibberella zeae (strain ATCC MYA-4620 / CBS 123657 / FGSC 9075 / NRRL 31084 / PH-1) (Wheat head blight fungus) protein is Protein BFR2 (BFR2).